We begin with the raw amino-acid sequence, 523 residues long: NAD(P)H-quinone oxidoreductase subunit 2 (523 aa).

Transmembrane regions (helical) follow at residues 29 to 49, 57 to 77, 94 to 114, 132 to 152, 182 to 202, 221 to 241, 255 to 275, 291 to 311, 317 to 337, 345 to 365, 389 to 409, 424 to 444, and 477 to 497; these read AVLP…VDLA, WVPP…ALQW, LAVA…LISW, LAAT…SIFI, LLVG…LYGL, PIAA…IAAV, PTPV…ALAL, LLFT…ALAQ, MLAY…VCGT, VLYM…IILF, LGLS…GFFG, LLVV…ISVI, and VALI…NPLF.

The protein belongs to the complex I subunit 2 family. NDH-1 can be composed of about 15 different subunits; different subcomplexes with different compositions have been identified which probably have different functions.

The protein resides in the cellular thylakoid membrane. The enzyme catalyses a plastoquinone + NADH + (n+1) H(+)(in) = a plastoquinol + NAD(+) + n H(+)(out). It carries out the reaction a plastoquinone + NADPH + (n+1) H(+)(in) = a plastoquinol + NADP(+) + n H(+)(out). Its function is as follows. NDH-1 shuttles electrons from an unknown electron donor, via FMN and iron-sulfur (Fe-S) centers, to quinones in the respiratory and/or the photosynthetic chain. The immediate electron acceptor for the enzyme in this species is believed to be plastoquinone. Couples the redox reaction to proton translocation, and thus conserves the redox energy in a proton gradient. Cyanobacterial NDH-1 also plays a role in inorganic carbon-concentration. The protein is NAD(P)H-quinone oxidoreductase subunit 2 of Synechococcus sp. (strain CC9902).